The following is a 601-amino-acid chain: Terpenoid synthase 17 (601 aa).

5 residues coordinate Mg(2+): Asn354, Asp358, Asn497, Thr501, and Glu505. Residues 354-358 carry the DDXXD motif; degenerate motif; that stretch reads NDTCD.

The protein belongs to the terpene synthase family. Tpsa subfamily. Requires Mg(2+) as cofactor. Mn(2+) is required as a cofactor. As to expression, expressed exclusively in flowers.

It localises to the cytoplasm. Its pathway is secondary metabolite biosynthesis; terpenoid biosynthesis. In Arabidopsis thaliana (Mouse-ear cress), this protein is Terpenoid synthase 17 (TPS17).